A 286-amino-acid polypeptide reads, in one-letter code: ATP synthase gamma chain (286 aa).

The protein belongs to the ATPase gamma chain family. F-type ATPases have 2 components, CF(1) - the catalytic core - and CF(0) - the membrane proton channel. CF(1) has five subunits: alpha(3), beta(3), gamma(1), delta(1), epsilon(1). CF(0) has three main subunits: a, b and c.

Its subcellular location is the cell membrane. Produces ATP from ADP in the presence of a proton gradient across the membrane. The gamma chain is believed to be important in regulating ATPase activity and the flow of protons through the CF(0) complex. The sequence is that of ATP synthase gamma chain from Bacillus cereus (strain G9842).